The sequence spans 220 residues: PKHD-type hydroxylase PCC7424_1929 (220 aa).

Residues 77–173 form the Fe2OG dioxygenase domain; sequence KIHSLLFSRY…RLVAVGWVQS (97 aa). 3 residues coordinate Fe cation: His-95, Asp-97, and His-154. Arg-164 is a 2-oxoglutarate binding site.

Fe(2+) serves as cofactor. Requires L-ascorbate as cofactor.

The sequence is that of PKHD-type hydroxylase PCC7424_1929 from Gloeothece citriformis (strain PCC 7424) (Cyanothece sp. (strain PCC 7424)).